The primary structure comprises 499 residues: Proline--tRNA ligase (499 aa).

Over residues 1–17 the composition is skewed to basic and acidic residues; that stretch reads MTKDGGKKDNQGQDKKA. Residues 1–21 form a disordered region; the sequence is MTKDGGKKDNQGQDKKAQQYG.

This sequence belongs to the class-II aminoacyl-tRNA synthetase family. ProS type 3 subfamily. As to quaternary structure, homodimer.

Its subcellular location is the cytoplasm. The enzyme catalyses tRNA(Pro) + L-proline + ATP = L-prolyl-tRNA(Pro) + AMP + diphosphate. Functionally, catalyzes the attachment of proline to tRNA(Pro) in a two-step reaction: proline is first activated by ATP to form Pro-AMP and then transferred to the acceptor end of tRNA(Pro). Can inadvertently accommodate and process cysteine. This chain is Proline--tRNA ligase (proS), found in Deinococcus radiodurans (strain ATCC 13939 / DSM 20539 / JCM 16871 / CCUG 27074 / LMG 4051 / NBRC 15346 / NCIMB 9279 / VKM B-1422 / R1).